We begin with the raw amino-acid sequence, 674 residues long: MRKILVTNALPYANGDLHLGHMLGYIQSDIWVRFQKLQGNQCIFVCGSDTHGTPIMLKAKSLGITPEELVTKYSNRHLQDFTDFEINFDNYHSTHNSLNKEIVEDIYNKLNNKNLISKKAIAQAYDPEAKMFLPDRFVKGTCPKCKAEDQYGDSCEVCGATYDPTELINPRSVISGQSPIQKNSEHFFFDLPALEKNIKDWIESNTLLQPEVANKLAEWFEQGLQSWDISRDAPYFGFAIPGTNEQKFFYVWLDAPMGYIASFKDYCNKNNINFGDFWGDSSSESELYHFIGKDIIYFHTLFWPAILSSTGYKTPTSVFANGFLTVNGKKMSKSRGTFIQARTYLDNLEPSYLRYYFASRLTSRIDDIDLNLEEFVTKSNSDIVGKVVNIASRCAGFIYKKFDATLSGEIFDPELESEFSKNHDAITQAFEKREFAHAVRLIMALADKANQFIDYHKPWQLAKEEGQEQKVHQVCSQGINMFKVLIVYLKPIIPSIVAEAERFLNIQFISWADAPKFLINHKIDKFKPLATRIEKEKVDKILEDTKKMLENEQSPQSKKEEPKLDIAAECTFDDFMKVDLRIAKITEASHVEGADKLLKLILDLGGVTKQVFAGIKSAYKPEDLIGKHTIMVANLAPRKMKFGMSEGMVLAAGDGKGIYILEPHEGAQPGMRVK.

A 'HIGH' region motif is present at residues 11–21 (PYANGDLHLGH). Cys-142, Cys-145, Cys-155, and Cys-158 together coordinate Zn(2+). The 'KMSKS' region motif lies at 330 to 334 (KMSKS). Lys-333 lines the ATP pocket. Positions 574–674 (DFMKVDLRIA…EGAQPGMRVK (101 aa)) constitute a tRNA-binding domain.

Belongs to the class-I aminoacyl-tRNA synthetase family. MetG type 1 subfamily. In terms of assembly, homodimer. It depends on Zn(2+) as a cofactor.

The protein resides in the cytoplasm. It carries out the reaction tRNA(Met) + L-methionine + ATP = L-methionyl-tRNA(Met) + AMP + diphosphate. Functionally, is required not only for elongation of protein synthesis but also for the initiation of all mRNA translation through initiator tRNA(fMet) aminoacylation. This is Methionine--tRNA ligase from Francisella tularensis subsp. tularensis (strain FSC 198).